We begin with the raw amino-acid sequence, 513 residues long: MPREHDSKYHRERDMRSGLQETASRAHLYKGEYWRQIFNRRTPEQRRTLSHIKRFMERLAGDIKFRTAVSESVDAPRAVTERYGIEVDPLEILPLWRDDHLTYRYKPESAPWPLSIMWDEYMRDMLRHRDLLRDHGDMSMTNPRFHAWRERQIRRCNDELGGSAPSITHPIIAFELSEGCTVGCWFCGLSAAPFKGYYEYSKQHAELWRGVVGVASEVFGPAARTGFCYWATEPMDNPQYDRFLFDYYQITGALPQTTTAAPLKDEALTRRVLGLFNLYGTTMNRFSVLSTAHLNQIHRAFSPEELTGVELIMQGKDAPTAKAFTGRARKRKEKLSARQEAIAFPERNHTTIACVSGFLVNMPQRRLQLVTPVPGSGRWPLGYRIVGQRSFRTPDEFRDGLKSMIDQHMLESPAPDLPIRFRRDLEYTAGDRCFHLRSRSMEHRVLDYAPISVGHLIACGNFTASELVMRASTDGISVLAVADLLDQLYAAGVIEEDLDDRYAWQTSDGITDR.

The segment covering 1 to 16 (MPREHDSKYHRERDMR) has biased composition (basic and acidic residues). Positions 1-21 (MPREHDSKYHRERDMRSGLQE) are disordered.

This is an uncharacterized protein from Sinorhizobium fredii (strain NBRC 101917 / NGR234).